Reading from the N-terminus, the 182-residue chain is MLFACALLALLGLATSCSFIVPRSEWRALPSECSSRLGHPVRYVVISHTAGSFCNSPDSCEQQARNVQHYHKNELGWCDVAYNFLIGEDGHVYEGRGWNIKGDHTGPIWNPMSIGITFMGNFMDRVPAKRALRAALNLLECGVSRGFLRSNYEVKGHRDVQSTLSPGDQLYQVIQSWEHYRE.

Positions 1–18 (MLFACALLALLGLATSCS) are cleaved as a signal peptide. Cystine bridges form between Cys17–Cys141, Cys33–Cys78, and Cys54–Cys60. One can recognise an N-acetylmuramoyl-L-alanine amidase domain in the interval 39–167 (HPVRYVVISH…RDVQSTLSPG (129 aa)).

This sequence belongs to the N-acetylmuramoyl-L-alanine amidase 2 family. In terms of assembly, homodimer; disulfide-linked. Interacts with HSPA1A; this interaction forms a cytotoxic complex that is released by lymphokine-activated killer cells. Interacts with HSPBP1; this interaction blocks the cytotoxic activity of the PGLYRP1-HSPA1A complex. As to expression, strongly expressed in spleen and lung. Also detected in brain and thymus. In the lung, expressed in the intraalveolar space, in the brain, expressed in the Purkinje cells of the cerebellum and in certain layers of neurons in the hippocampus. Also detected in cells filling the space within the intestinal villus.

The protein resides in the cytoplasm. It is found in the secreted. Innate immunity protein that plays several important functions in antimicrobial and antitumor defense systems. Acts as a pattern receptor that binds to murein peptidoglycans (PGN) of Gram-positive bacteria and thus provides bactericidal activity. Forms an equimolar complex with heat shock protein HSPA1A and induces programmed cell death through apoptosis and necroptosis in tumor cell lines by activating the TNFR1 receptor on the target cell membrane. In addition, acts in complex with the Ca(2+)-binding protein S100A4 as a chemoattractant able to induce lymphocyte movement. Mechanistically, this complex acts as a ligand of the chemotactic receptors CCR5 and CXCR3 which are present on the cells of the immune system. Also promotes the activation of lymphocytes that become able to kill virus-infected cells as well as tumor cells by modulating the spectrum of their target-cell specificity. Induction of cytotoxicity on monocyte surface requires interaction with TREM1 receptor. The protein is Peptidoglycan recognition protein 1 (Pglyrp1) of Mus musculus (Mouse).